Here is a 459-residue protein sequence, read N- to C-terminus: UDP-N-acetylmuramate--L-alanine ligase (459 aa).

113–119 (GSHGKTS) is a binding site for ATP.

This sequence belongs to the MurCDEF family.

It is found in the cytoplasm. The catalysed reaction is UDP-N-acetyl-alpha-D-muramate + L-alanine + ATP = UDP-N-acetyl-alpha-D-muramoyl-L-alanine + ADP + phosphate + H(+). The protein operates within cell wall biogenesis; peptidoglycan biosynthesis. Functionally, cell wall formation. In Desulfotalea psychrophila (strain LSv54 / DSM 12343), this protein is UDP-N-acetylmuramate--L-alanine ligase.